A 2322-amino-acid polypeptide reads, in one-letter code: Genome polyprotein (2322 aa).

The region spanning 29–182 is the Peptidase C28 domain; that stretch reads MEFTLYNGEK…NPADVLVFVP (154 aa). Catalysis depends on for leader protease activity residues C51, H148, and D163. Disordered regions lie at residues 199 to 219 and 238 to 262; these read RLRG…SGNT and QLGD…HTNN. G202 is lipidated: N-myristoyl glycine; by host. Composition is skewed to polar residues over residues 204–219 and 238–251; these read GQSS…SGNT and QLGD…SNEG. Residues 252 to 262 are compositionally biased toward low complexity; the sequence is STDTTSTHTNN. The Cell attachment site motif lies at 869–871; the sequence is RGD. An SF3 helicase domain is found at 1189-1353; sequence NVHIANLCKV…DGYKINNKLD (165 aa). 1217 to 1224 contacts ATP; that stretch reads GKSGQGKS. An intramembrane segment occupies 1484 to 1504; that stretch reads FEVVALCLTLLANIVIMLRQA. Positions 1512–1574 are disordered; that stretch reads DDPLDGDVTL…PRAEGPYAGP (63 aa). Over residues 1539–1553 the composition is skewed to basic and acidic residues; the sequence is FRERSPTEQGTREDA. O-(5'-phospho-RNA)-tyrosine occurs at positions 1571, 1594, and 1618. The region spanning 1642-1838 is the Peptidase C3 domain; that stretch reads APPTDLQKMV…YCSCVSRSML (197 aa). H1685 serves as the catalytic For protease 3C activity; Proton donor/acceptor. Active-site for protease 3C activity residues include D1723 and C1802. A Nuclear localization signal motif is present at residues 1868–1876; it reads MRKTKLAPT. The RdRp catalytic domain occupies 2086 to 2204; sequence KNVWDVDYSA…ASDYDLDFEA (119 aa).

The protein belongs to the picornaviruses polyprotein family. Interacts with host ISG15. In terms of assembly, interacts (via R-G-D motif) with host ITGAV/ITGB6. Interacts with host MAVS; this interaction inhibits binding of host TRAF3 to MAVS, thereby suppressing interferon-mediated responses. As to quaternary structure, forms homooligomers. Homohexamer. Interacts with host VIM. Interacts with host BECN1. In terms of assembly, interacts with host DCTN3. As to quaternary structure, interacts with RNA-dependent RNA polymerase; this interaction allows 3B-1 to binds 2 polymerases and act as a primer. It also allows the recruitment of the RNA-dependent RNA polymerase to host membranes. Interacts with RNA-dependent RNA polymerase; this interaction allows 3B-2 to act as a primer. In terms of assembly, interacts with RNA-dependent RNA polymerase; this interaction allows 3B-3 to act as a primer. As to quaternary structure, interacts with 3B-1; this interaction allows 3B-1 to binds 2 polymerases and act as a primer. It also allows the recruitment of the RNA-dependent RNA polymerase to host membranes. Interacts with 3B-2; this interaction allows 3B-2 to act as a primer. Interacts with 3B-3; this interaction allows 3B-3 to act as a primer. Removes six residues from its own C-terminus, generating sLb(pro). In terms of processing, specific enzymatic cleavages in vivo by the viral proteases yield a variety of precursors and mature proteins. The polyprotein seems to be cotranslationally cleaved at the 2A/2B junction by a ribosomal skip from one codon to the next without formation of a peptide bond. This process would release the L-P1-2A peptide from the translational complex. Post-translationally, during virion maturation, immature virions are rendered infectious following cleavage of VP0 into VP4 and VP2. This maturation seems to be an autocatalytic event triggered by the presence of RNA in the capsid and is followed by a conformational change of the particle. Myristoylation is required during RNA encapsidation and formation of the mature virus particle. In terms of processing, uridylylated by the polymerase and covalently linked to the 5'-end of genomic RNA. These uridylylated forms act as a nucleotide-peptide primer for the polymerase.

Its subcellular location is the host nucleus. It is found in the host cytoplasm. The protein resides in the virion. The protein localises to the host endoplasmic reticulum membrane. It localises to the host cytoplasmic vesicle membrane. The catalysed reaction is Autocatalytically cleaves itself from the polyprotein of the foot-and-mouth disease virus by hydrolysis of a Lys-|-Gly bond, but then cleaves host cell initiation factor eIF-4G at bonds -Gly-|-Arg- and -Lys-|-Arg-.. It catalyses the reaction a ribonucleoside 5'-triphosphate + H2O = a ribonucleoside 5'-diphosphate + phosphate + H(+). It carries out the reaction RNA(n) + a ribonucleoside 5'-triphosphate = RNA(n+1) + diphosphate. The enzyme catalyses Selective cleavage of Gln-|-Gly bond in the poliovirus polyprotein. In other picornavirus reactions Glu may be substituted for Gln, and Ser or Thr for Gly.. In terms of biological role, autocatalytically cleaves itself from the polyprotein at the L/VP0 junction. Also cleaves the host translation initiation factors EIF4G1 and EIF4G3, in order to shut off the capped cellular mRNA transcription. Plays a role in counteracting host innate antiviral response using diverse mechanisms. Possesses a deubiquitinase activity acting on both 'Lys-48' and 'Lys-63'-linked polyubiquitin chains. In turn, inhibits the ubiquitination and subsequent activation of key signaling molecules of type I IFN response such as host RIGI, TBK1, TRAF3 and TRAF6. Inhibits host NF-kappa-B activity by inducing a decrease in RELA mRNA levels. Cleaves a peptide bond in the C-terminus of host ISG15, resulting in the damaging of this modifier that can no longer be attached to target proteins. Also cleaves host G3BP1 and G3BP2 in order to inhibit cytoplasmic stress granules assembly. Lies on the inner surface of the capsid shell. After binding to the host receptor, the capsid undergoes conformational changes. Capsid protein VP4 is released, capsid protein VP1 N-terminus is externalized, and together, they shape a pore in the host membrane through which the viral genome is translocated into the host cell cytoplasm. After genome has been released, the channel shrinks. Its function is as follows. Forms an icosahedral capsid of pseudo T=3 symmetry with capsid proteins VP1 and VP3. The capsid is composed of 60 copies of each capsid protein organized in the form of twelve pentamers and encloses the viral positive strand RNA genome. Upon acidifcation in the endosome, dissociates into pentamers. Functionally, forms an icosahedral capsid of pseudo T=3 symmetry with capsid proteins VP0 and VP3. The capsid is composed of 60 copies of each capsid protein organized in the form of twelve pentamers and encloses the viral positive strand RNA genome. Upon acidifcation in the endosome, dissociates into pentamers. In terms of biological role, forms an icosahedral capsid of pseudo T=3 symmetry with capsid proteins VP2 and VP3. The capsid is composed of 60 copies of each capsid protein organized in the form of twelve pentamers and encloses the viral positive strand RNA genome. Mediates cell entry by attachment to an integrin receptor, usually host ITGAV/ITGB6. In addition, targets host MAVS to suppress type I IFN pathway. Upon acidifcation in the endosome, dissociates into pentamers. Mediates self-processing of the polyprotein by a translational effect termed 'ribosome skipping'. Mechanistically, 2A-mediated cleavage occurs between the C-terminal glycine and the proline of the downstream protein 2B. In the case of foot-and-mouth disease virus, the 2A oligopeptide is post-translationally 'trimmed' from the C-terminus of the upstream protein 1D by 3C proteinase. Its function is as follows. Plays an essential role in the virus replication cycle by acting as a viroporin. Creates a pore in the host endoplasmic reticulum and as a consequence releases Ca2+ in the cytoplasm of infected cell. In turn, high levels of cytoplasmic calcium may trigger membrane trafficking and transport of viral ER-associated proteins to viroplasms, sites of viral genome replication. Functionally, associates with and induces structural rearrangements of intracellular membranes. Triggers host autophagy by interacting with host BECN1 and thereby promotes viral replication. Participates in viral replication and interacts with host DHX9. Displays RNA-binding, nucleotide binding and NTPase activities. May play a role in virion morphogenesis and viral RNA encapsidation by interacting with the capsid protein VP3. In terms of biological role, plays important roles in virus replication, virulence and host range. Cooperates with host DDX56 to inhibit IRF3 nuclear translocation and subsequent type I interferon production. Covalently linked to the 5'-end of both the positive-strand and negative-strand genomic RNAs. Acts as a genome-linked replication primer. Its function is as follows. Cysteine protease that generates mature viral proteins from the precursor polyprotein. In addition to its proteolytic activity, binds to viral RNA and thus influences viral genome replication. RNA and substrate bind cooperatively to the protease. Functionally, RNA-directed RNA polymerase 3D-POL replicates genomic and antigenomic RNA by recognizing replications specific signals. Covalently attaches UMP to a tyrosine of VPg, which is used to prime RNA synthesis. The positive stranded RNA genome is first replicated at virus induced membranous vesicles, creating a dsRNA genomic replication form. This dsRNA is then used as template to synthesize positive stranded RNA genomes. ss(+)RNA genomes are either translated, replicated or encapsidated. This Foot-and-mouth disease virus (isolate Swine/Taiwan/OTai/1997 serotype O) (FMDV) protein is Genome polyprotein.